A 134-amino-acid polypeptide reads, in one-letter code: MSEREVLQKINSPEGKEDRIIGKHVFGNLYDIDAERLNDKEFLEKLVLEAVDIAHMKLVEIKAWSFGGKKGGVSVIALVEESHIALHTWNEYNYATLDVYTCGEDSDPQSAFAHIVNALNPKRYQMFYADRSSQ.

Ser-82 (schiff-base intermediate with substrate; via pyruvic acid) is an active-site residue. Ser-82 is subject to Pyruvic acid (Ser); by autocatalysis. His-87 serves as the catalytic Proton acceptor; for processing activity. The active-site Proton donor; for catalytic activity is the Cys-102.

Belongs to the prokaryotic AdoMetDC family. Type 1 subfamily. As to quaternary structure, heterooctamer of four alpha and four beta chains arranged as a tetramer of alpha/beta heterodimers. Requires pyruvate as cofactor. In terms of processing, is synthesized initially as an inactive proenzyme. Formation of the active enzyme involves a self-maturation process in which the active site pyruvoyl group is generated from an internal serine residue via an autocatalytic post-translational modification. Two non-identical subunits are generated from the proenzyme in this reaction, and the pyruvate is formed at the N-terminus of the alpha chain, which is derived from the carboxyl end of the proenzyme. The post-translation cleavage follows an unusual pathway, termed non-hydrolytic serinolysis, in which the side chain hydroxyl group of the serine supplies its oxygen atom to form the C-terminus of the beta chain, while the remainder of the serine residue undergoes an oxidative deamination to produce ammonia and the pyruvoyl group blocking the N-terminus of the alpha chain.

It carries out the reaction L-arginine + H(+) = agmatine + CO2. The protein operates within amine and polyamine biosynthesis; agmatine biosynthesis; agmatine from L-arginine: step 1/1. Its activity is regulated as follows. Highly competitively inhibited by L-argininamide and L-arginine methyl ester. Also inhibited by alpha-difluoromethylarginine. Is not stimulated by potassium chloride as observed for other decarboxylases. Functionally, specifically catalyzes the decarboxylation of L-arginine to agmatine. Is also able to decarboxylate L-canavanine, although less efficiently. Has no S-adenosylmethionine decarboxylase (AdoMetDC) activity. This chain is Arginine decarboxylase proenzyme, found in Saccharolobus solfataricus (strain ATCC 35092 / DSM 1617 / JCM 11322 / P2) (Sulfolobus solfataricus).